The chain runs to 148 residues: UPF0756 membrane protein YeaL (148 aa).

Transmembrane regions (helical) follow at residues 14–34 (ALGF…LIIV), 51–71 (LSIG…SGTL), 86–106 (LVAI…VTLM), and 112–132 (LVAG…GVPV).

It belongs to the UPF0756 family.

It is found in the cell membrane. The sequence is that of UPF0756 membrane protein YeaL from Escherichia coli O157:H7.